Here is a 450-residue protein sequence, read N- to C-terminus: MGKYFGTDGVRGVANSELTPELAFRLGRMGGYVLTRHVGEHPRVLVARDTRISGEMLESALIAGLVSVGIEVMRLGVISTPGVAYLTKAQGASASVMISASHNPVDDNGIKFFGSDGFKLSDDQEEEIEQLLDTAEDTLPRPSGEGLGTVSDYFEGKQKYIQYLKQTIENDFNGYHIALDCANGATSGLATHLFADLDADISSMGASPNGLNINDGVGSTHPEALAAFVLDKKADVGLAFDGDGDRVIAIDEIGQIVDGDKIMFICAKYLREQGLLNNNTIVSTVMSNLGFYKGLKELEIEDVQTAVGDRYVVEAMREGNYNLGGEQSGHIIFLDHNTTGDGLLSGIQLINVMKATGKKLSELAAEMKTFPQKLENIRVSDKNHVTDNPKVSKVIGEVEAEMAGNGRVLVRPSGTEPLVRVMVEAATKEETDEYCERISAVVRSEMALND.

Catalysis depends on serine 101, which acts as the Phosphoserine intermediate. Serine 101, aspartate 241, aspartate 243, and aspartate 245 together coordinate Mg(2+). Serine 101 carries the post-translational modification Phosphoserine.

This sequence belongs to the phosphohexose mutase family. Mg(2+) serves as cofactor. Post-translationally, activated by phosphorylation.

The enzyme catalyses alpha-D-glucosamine 1-phosphate = D-glucosamine 6-phosphate. Catalyzes the conversion of glucosamine-6-phosphate to glucosamine-1-phosphate. The chain is Phosphoglucosamine mutase from Listeria monocytogenes serotype 4b (strain F2365).